The chain runs to 190 residues: GMP synthase [glutamine-hydrolyzing] subunit A (190 aa).

In terms of domain architecture, Glutamine amidotransferase type-1 spans 2–189 (TILVINNKGQ…YEICKKRCNN (188 aa)). Cysteine 76 functions as the Nucleophile in the catalytic mechanism. Catalysis depends on residues histidine 163 and glutamate 165.

In terms of assembly, heterodimer composed of a glutamine amidotransferase subunit (A) and a GMP-binding subunit (B).

It catalyses the reaction XMP + L-glutamine + ATP + H2O = GMP + L-glutamate + AMP + diphosphate + 2 H(+). The protein operates within purine metabolism; GMP biosynthesis; GMP from XMP (L-Gln route): step 1/1. Functionally, catalyzes the synthesis of GMP from XMP. The sequence is that of GMP synthase [glutamine-hydrolyzing] subunit A from Methanobrevibacter smithii (strain ATCC 35061 / DSM 861 / OCM 144 / PS).